Here is a 418-residue protein sequence, read N- to C-terminus: Methylmalonic aciduria type A protein, mitochondrial (418 aa).

The transit peptide at 1–65 directs the protein to the mitochondrion; that stretch reads MPMLLPHPHQ…LLSDGLKRKL (65 aa). GTP contacts are provided by residues 150–158, Asp292, and 328–330; these read GPPGAGKST and SAR.

Belongs to the SIMIBI class G3E GTPase family. ArgK/MeaB subfamily. In terms of assembly, homodimer. Interacts with MMUT (the apoenzyme form); the interaction is GTP dependent. In terms of tissue distribution, widely expressed. Highest expression is observed in liver and skeletal muscle.

Its subcellular location is the mitochondrion. The protein localises to the cytoplasm. The enzyme catalyses GTP + H2O = GDP + phosphate + H(+). With respect to regulation, GTPase activity is stimulated by MMUT. Functionally, GTPase, binds and hydrolyzes GTP. Involved in intracellular vitamin B12 metabolism, mediates the transport of cobalamin (Cbl) into mitochondria for the final steps of adenosylcobalamin (AdoCbl) synthesis. Functions as a G-protein chaperone that assists AdoCbl cofactor delivery from MMAB to the methylmalonyl-CoA mutase (MMUT). Plays a dual role as both a protectase and a reactivase for MMUT. Protects MMUT from progressive inactivation by oxidation by decreasing the rate of the formation of the oxidized inactive cofactor hydroxocobalamin (OH2Cbl). Additionally acts a reactivase by promoting the replacement of OH2Cbl by the active cofactor AdoCbl, restoring the activity of MMUT in the presence and hydrolysis of GTP. This Homo sapiens (Human) protein is Methylmalonic aciduria type A protein, mitochondrial.